The primary structure comprises 243 residues: Asnovolin H synthase nvfL (243 aa).

Transmembrane regions (helical) follow at residues 20-42, 51-71, 75-95, 112-132, 138-160, 169-189, and 205-225; these read ANTL…AYYS, ALIP…IHCP, FVRI…YAAI, LPFI…ALAA, IAFV…SQLL, SYVV…MVTI, and LLLW…FCFY.

The protein belongs to the paxB family.

Its subcellular location is the membrane. It catalyses the reaction (3R)-[(10S)-11-epoxyfarnesyl]-2,3,5-trimethyl-6-oxido-4-oxocyclohexa-1,5-diene-1-carboxylate + H(+) = asnovolin H. The protein operates within secondary metabolite biosynthesis; terpenoid biosynthesis. Its function is as follows. Terpene cyclase; part of the gene cluster that mediates the biosynthesis of novofumigatonin, a heavily oxygenated meroterpenoid containing a unique orthoester moiety. The first step of the pathway is the synthesis of 3,5-dimethylorsellinic acid (DMOA) by the polyketide synthase nvfA via condensation of one acetyl-CoA starter unit with 3 malonyl-CoA units and 2 methylations. DMOA is then converted to farnesyl-DMOA by the farnesyltransferase nvfB. Epoxydation by FAD-dependent monooxygenase nvfK, followed by a protonation-initiated cyclization catalyzed by the terpene cyclase nvfL leads to the production of asnavolin H. The short chain dehydrogenase nvfC then as a 3-OH dehydrogenase of asnovolin H to yield chemesin D. There are two branches to synthesize asnovolin A from chemesin D. In one branch, chemesin D undergoes Baeyer-Villiger oxidation by nvfH, methylation by nvfJ, and enoyl reduction by the nvfM D enoylreductase that reduces the double bond between C-5'and C-6', to form respectively asnovolin I, asnovolin K, and asnovolin A. In the other branch, the methylation precedes the Baeyer-Villiger oxidation and the enoyl reduction to yield asnovolin A via the asnovolin J intermediate. Asnovolin A is further converted to fumigatonoid A by the Fe(II)/2-oxoglutarate-dependent dioxygenase nvfI that catalyzes an endoperoxidation reaction. The alpha/beta hydrolase nvfD then acts as an epimerase that converts fumigatonoid A to its C-5' epimer, which then undergoes spontaneous or nvfD-catalyzed lactonization. The following step utilizes the ketoreductase nvfG to produce fumigatonoid B. The dioxygenase nvfE further converts fumigatonoid B into fumigatonoid C. Finally the Fe(II)/2-oxoglutarate-dependent dioxygenase nvfF catalyzes two rounds of oxidation to transform fumigatonoid C into the end product, novofumigatonin A. This Aspergillus novofumigatus (strain IBT 16806) protein is Asnovolin H synthase nvfL.